A 540-amino-acid polypeptide reads, in one-letter code: Cytokinin dehydrogenase 5 (540 aa).

An N-terminal signal peptide occupies residues 1–22; sequence MNREMTSSFLLLTFAICKLIIA. The region spanning 63–241 is the FAD-binding PCMH-type domain; it reads SPEEPLAVLH…TRARISLEPA (179 aa). 3 residues coordinate FAD: Ala-97, Gly-99, and Gly-101. His-102 bears the Pros-8alpha-FAD histidine mark. Positions 103, 107, 165, 170, 176, 180, and 231 each coordinate FAD. N-linked (GlcNAc...) asparagine glycosylation is found at Asn-310 and Asn-406. FAD is bound by residues Tyr-479 and Gln-517.

This sequence belongs to the oxygen-dependent FAD-linked oxidoreductase family. FAD is required as a cofactor. In terms of tissue distribution, expressed in the developing leaf petioles and in the rib zone of the axillary shoot meristems. In roots, expressed in the vascular cylinder within the root apical meristem and only faintly detectable in the differentiated root.

The protein resides in the secreted. Its subcellular location is the extracellular space. The enzyme catalyses N(6)-dimethylallyladenine + A + H2O = 3-methyl-2-butenal + adenine + AH2. Functionally, catalyzes the oxidation of cytokinins, a family of N(6)-substituted adenine derivatives that are plant hormones, where the substituent is an isopentenyl group. In association with CKX3 regulates the activity of the reproductive meristems, flower organ size and ovule formation. The polypeptide is Cytokinin dehydrogenase 5 (CKX5) (Arabidopsis thaliana (Mouse-ear cress)).